We begin with the raw amino-acid sequence, 38 residues long: Cytochrome b6-f complex subunit 5 (38 aa).

The helical transmembrane segment at 5-25 (LLLGIVLGLIPITLAGLFVAA) threads the bilayer.

Belongs to the PetG family. In terms of assembly, the 4 large subunits of the cytochrome b6-f complex are cytochrome b6, subunit IV (17 kDa polypeptide, PetD), cytochrome f and the Rieske protein, while the 4 small subunits are PetG, PetL, PetM and PetN. The complex functions as a dimer.

The protein resides in the cellular thylakoid membrane. Functionally, component of the cytochrome b6-f complex, which mediates electron transfer between photosystem II (PSII) and photosystem I (PSI), cyclic electron flow around PSI, and state transitions. PetG is required for either the stability or assembly of the cytochrome b6-f complex. The protein is Cytochrome b6-f complex subunit 5 of Crocosphaera subtropica (strain ATCC 51142 / BH68) (Cyanothece sp. (strain ATCC 51142)).